The sequence spans 548 residues: Membrane protein insertase YidC (548 aa).

The helical transmembrane segment at 6–26 (NLLVIALLFVSFMIWQAWEQD) threads the bilayer. A disordered region spans residues 28 to 56 (NPQPQTQQTTQTTTTAAGSAADQGVPASG). Low complexity predominate over residues 29-42 (PQPQTQQTTQTTTT). The next 4 helical transmembrane spans lie at 350–370 (FVGN…GIMY), 424–444 (FPLI…MGSI), 458–478 (LSAQ…MFFI), and 499–519 (PVIF…YYIV).

Belongs to the OXA1/ALB3/YidC family. Type 1 subfamily. Interacts with the Sec translocase complex via SecD. Specifically interacts with transmembrane segments of nascent integral membrane proteins during membrane integration.

It is found in the cell inner membrane. In terms of biological role, required for the insertion and/or proper folding and/or complex formation of integral membrane proteins into the membrane. Involved in integration of membrane proteins that insert both dependently and independently of the Sec translocase complex, as well as at least some lipoproteins. Aids folding of multispanning membrane proteins. In Salmonella newport (strain SL254), this protein is Membrane protein insertase YidC.